The following is a 356-amino-acid chain: Probable cinnamyl alcohol dehydrogenase (356 aa).

Cys-47 contributes to the Zn(2+) binding site. Ser-49 is an NADP(+) binding site. His-69, Glu-70, Cys-100, Cys-103, Cys-106, Cys-114, and Cys-163 together coordinate Zn(2+). Residues Thr-167, 188–193 (GLGGVG), 211–216 (SSSDKK), Thr-251, Gly-275, and 298–300 (SFI) contribute to the NADP(+) site.

Belongs to the zinc-containing alcohol dehydrogenase family. As to quaternary structure, homodimer. Requires Zn(2+) as cofactor.

It catalyses the reaction (E)-cinnamyl alcohol + NADP(+) = (E)-cinnamaldehyde + NADPH + H(+). The catalysed reaction is (E)-coniferol + NADP(+) = (E)-coniferaldehyde + NADPH + H(+). The enzyme catalyses (E)-sinapyl alcohol + NADP(+) = (E)-sinapaldehyde + NADPH + H(+). It carries out the reaction (E)-4-coumaroyl alcohol + NADP(+) = (E)-4-coumaraldehyde + NADPH + H(+). It catalyses the reaction (E)-caffeyl alcohol + NADP(+) = (E)-caffeyl aldehyde + NADPH + H(+). It participates in aromatic compound metabolism; phenylpropanoid biosynthesis. Involved in lignin biosynthesis. Catalyzes the final step specific for the production of lignin monomers. Catalyzes the NADPH-dependent reduction of coniferaldehyde, 5-hydroxyconiferaldehyde, sinapaldehyde, 4-coumaraldehyde and caffeyl aldehyde to their respective alcohols. The protein is Probable cinnamyl alcohol dehydrogenase (CAD) of Eucalyptus globulus (Tasmanian blue gum).